The sequence spans 525 residues: Endoglucanase 10 (525 aa).

Residues 1-26 (MEEKSKSRGWCGWFIAIIVLASVILA) form the signal peptide. Aspartate 109 functions as the Nucleophile in the catalytic mechanism. Residue asparagine 259 is glycosylated (N-linked (GlcNAc...) asparagine). Residue histidine 442 is part of the active site. Asparagine 464 and asparagine 484 each carry an N-linked (GlcNAc...) asparagine glycan. Active-site residues include aspartate 489 and glutamate 498.

This sequence belongs to the glycosyl hydrolase 9 (cellulase E) family.

The protein resides in the secreted. It carries out the reaction Endohydrolysis of (1-&gt;4)-beta-D-glucosidic linkages in cellulose, lichenin and cereal beta-D-glucans.. The sequence is that of Endoglucanase 10 from Arabidopsis thaliana (Mouse-ear cress).